The chain runs to 888 residues: 3-hydroxy-3-methylglutaryl-coenzyme A reductase (888 aa).

At 1-9 the chain is on the cytoplasmic side; the sequence is MLSRLFRMH. Residues 10–39 form a helical membrane-spanning segment; the sequence is GLFVASHPWEVIVGTVTLTICMMSMNMFTG. Residues 40–56 lie on the Lumenal side of the membrane; sequence NNKICGWNYECPKLEED. Residues 57–78 form a helical membrane-spanning segment; it reads VLSSDIIILTITRCIAILYIYF. The SSD domain occupies 61–218; sequence DIIILTITRC…MTFFPACVSL (158 aa). Residues 75 to 78 carry the INSIG-binding motif motif; it reads YIYF. At 79–89 the chain is on the cytoplasmic side; that stretch reads QFQNLRQLGSK. A Glycyl lysine isopeptide (Lys-Gly) (interchain with G-Cter in ubiquitin) cross-link involves residue K89. The chain crosses the membrane as a helical span at residues 90 to 114; the sequence is YILGIAGLFTIFSSFVFSTVVIHFL. The Lumenal segment spans residues 115–123; it reads DKELTGLNE. The chain crosses the membrane as a helical span at residues 124–149; the sequence is ALPFFLLLVDLSRASALAKFALSSNS. Over 150–159 the chain is Cytoplasmic; it reads QDEVRENIAR. Residues 160 to 187 traverse the membrane as a helical segment; sequence GMAILGPTFTLDALVECLVIGVGTMSGV. Over 188 to 191 the chain is Lumenal; it reads RQLE. The chain crosses the membrane as a helical span at residues 192-220; it reads IMCCFGCMSVLANYFVFMTFFPACVSLVL. Over 221-248 the chain is Cytoplasmic; sequence ELSRESREGRPIWQLSHFARVLEEEENK. Residue K248 forms a Glycyl lysine isopeptide (Lys-Gly) (interchain with G-Cter in ubiquitin) linkage. A helical transmembrane segment spans residues 249-275; the sequence is PNPVTQRVKMIMSLGLVLVHAHSRWIA. Topologically, residues 276 to 314 are lumenal; the sequence is DPSPQNSTADNSKVSLGLDENVSKRIEPSVSLWQFYLSK. 2 N-linked (GlcNAc...) asparagine glycosylation sites follow: N281 and N296. Residues 315-339 form a helical membrane-spanning segment; sequence MISMDIEQVITLSLALLLAVKYIFF. Residues 340–888 are Cytoplasmic-facing; it reads EQAETESTLS…LQGTCTKKAA (549 aa). Active-site charge relay system residues include E559, K691, and D767. H866 (proton donor) is an active-site residue. At S872 the chain carries Phosphoserine; by AMPK.

Belongs to the HMG-CoA reductase family. As to quaternary structure, homotetramer. Homodimer. Interacts (via its SSD) with INSIG1; the interaction, accelerated by sterols, leads to the recruitment of HMGCR to AMFR/gp78 for its ubiquitination by the sterol-mediated ERAD pathway. Interacts with UBIAD1. In terms of processing, undergoes sterol-mediated ubiquitination and ER-associated degradation (ERAD). Accumulation of sterols in the endoplasmic reticulum (ER) membrane, triggers binding of the reductase to the ER membrane protein INSIG1 or INSIG2. The INSIG1 binding leads to the recruitment of the ubiquitin ligase, AMFR/gp78, RNF139 or RNF145, initiating ubiquitination of the reductase. The ubiquitinated reductase is then extracted from the ER membrane and delivered to cytosolic 26S proteosomes by a mechanism probably mediated by the ATPase Valosin-containing protein VCP/p97. The INSIG2-binding leads to the recruitment of the ubiquitin ligase RNF139, initiating ubiquitination of the reductase. Lys-248 is the main site of ubiquitination. Ubiquitination is enhanced by the presence of a geranylgeranylated protein. Post-translationally, N-glycosylated. Deglycosylated by NGLY1 on release from the endoplasmic reticulum (ER) in a sterol-mediated manner. Phosphorylated. Phosphorylation at Ser-872 reduces the catalytic activity.

The protein resides in the endoplasmic reticulum membrane. Its subcellular location is the peroxisome membrane. The catalysed reaction is (R)-mevalonate + 2 NADP(+) + CoA = (3S)-3-hydroxy-3-methylglutaryl-CoA + 2 NADPH + 2 H(+). Its pathway is metabolic intermediate biosynthesis; (R)-mevalonate biosynthesis; (R)-mevalonate from acetyl-CoA: step 3/3. With respect to regulation, regulated by a negative feedback mechanism through sterols and non-sterol metabolites derived from mevalonate. Phosphorylation at Ser-872 down-regulates the catalytic activity. Its function is as follows. Catalyzes the conversion of (3S)-hydroxy-3-methylglutaryl-CoA (HMG-CoA) to mevalonic acid, the rate-limiting step in the synthesis of cholesterol and other isoprenoids, thus plays a critical role in cellular cholesterol homeostasis. This chain is 3-hydroxy-3-methylglutaryl-coenzyme A reductase (HMGCR), found in Bos taurus (Bovine).